The chain runs to 269 residues: uncharacterized protein (269 aa).

Residues 52–262 adopt a coiled-coil conformation; sequence KNVYEQLVAT…RKILVESINK (211 aa).

This is an uncharacterized protein from Caenorhabditis elegans.